A 94-amino-acid chain; its full sequence is Acylphosphatase (94 aa).

The 87-residue stretch at 8–94 folds into the Acylphosphatase-like domain; sequence RLTAWVHGRV…REQITGFHER (87 aa). Residues Arg23 and Asn41 contribute to the active site.

It belongs to the acylphosphatase family.

It catalyses the reaction an acyl phosphate + H2O = a carboxylate + phosphate + H(+). This is Acylphosphatase (acyP) from Mycobacterium sp. (strain KMS).